The primary structure comprises 165 residues: Putative 4-hydroxy-4-methyl-2-oxoglutarate aldolase (165 aa).

Substrate is bound by residues 80–83 and R102; that span reads GGNL. A divalent metal cation is bound at residue D103.

This sequence belongs to the class II aldolase/RraA-like family. In terms of assembly, homotrimer. A divalent metal cation is required as a cofactor.

It catalyses the reaction 4-hydroxy-4-methyl-2-oxoglutarate = 2 pyruvate. The enzyme catalyses oxaloacetate + H(+) = pyruvate + CO2. In terms of biological role, catalyzes the aldol cleavage of 4-hydroxy-4-methyl-2-oxoglutarate (HMG) into 2 molecules of pyruvate. Also contains a secondary oxaloacetate (OAA) decarboxylase activity due to the common pyruvate enolate transition state formed following C-C bond cleavage in the retro-aldol and decarboxylation reactions. This Cupriavidus taiwanensis (strain DSM 17343 / BCRC 17206 / CCUG 44338 / CIP 107171 / LMG 19424 / R1) (Ralstonia taiwanensis (strain LMG 19424)) protein is Putative 4-hydroxy-4-methyl-2-oxoglutarate aldolase.